Reading from the N-terminus, the 248-residue chain is PF03932 family protein CutC (248 aa).

Belongs to the CutC family.

It is found in the cytoplasm. This Citrobacter koseri (strain ATCC BAA-895 / CDC 4225-83 / SGSC4696) protein is PF03932 family protein CutC.